The chain runs to 679 residues: Biosynthetic arginine decarboxylase (679 aa).

Residues 1–43 are disordered; it reads MKHRGQEEMGVESTATSDEVVKVPANGNKLEGKNHKQKKLLPT. Residue Lys-149 is modified to N6-(pyridoxal phosphate)lysine. 331-341 serves as a coordination point for substrate; sequence LDVGGGLGVDY.

It belongs to the Orn/Lys/Arg decarboxylase class-II family. SpeA subfamily. The cofactor is Mg(2+). Pyridoxal 5'-phosphate is required as a cofactor.

It carries out the reaction L-arginine + H(+) = agmatine + CO2. Functionally, catalyzes the biosynthesis of agmatine from arginine. This is Biosynthetic arginine decarboxylase from Nostoc sp. (strain PCC 7120 / SAG 25.82 / UTEX 2576).